The following is a 230-amino-acid chain: Ribose-5-phosphate isomerase A (230 aa).

Substrate contacts are provided by residues 29-32 (SGST), 86-89 (DGAD), and 99-102 (KGGG). Glutamate 108 functions as the Proton acceptor in the catalytic mechanism. Lysine 126 contributes to the substrate binding site.

The protein belongs to the ribose 5-phosphate isomerase family. Homodimer.

It catalyses the reaction aldehydo-D-ribose 5-phosphate = D-ribulose 5-phosphate. It functions in the pathway carbohydrate degradation; pentose phosphate pathway; D-ribose 5-phosphate from D-ribulose 5-phosphate (non-oxidative stage): step 1/1. Catalyzes the reversible conversion of ribose-5-phosphate to ribulose 5-phosphate. The protein is Ribose-5-phosphate isomerase A of Desulfatibacillum aliphaticivorans.